The following is a 403-amino-acid chain: Forkhead box protein Q1 (403 aa).

2 disordered regions span residues 1–75 and 94–116; these read MKLE…PGAE and GAAG…PYTR. Over residues 32-48 the composition is skewed to low complexity; the sequence is LSAAGDDSLGSDGDCAA. A compositionally biased stretch (gly residues) spans 96-107; it reads AGPGAGGAGSGE. The fork-head DNA-binding region spans 119 to 214; sequence KPPYSYIALI…ADGVFRRRRK (96 aa). Residues 216-266 are disordered; that stretch reads LSHRAPVPAPGLRPEEAPGLPAAPPPAPAAPASPRMRSPARQEERASPAGK. Residues 236 to 246 show a composition bias toward pro residues; that stretch reads PAAPPPAPAAP.

As to expression, expressed predominantly in the stomach, trachea, bladder and salivary gland.

Its subcellular location is the nucleus. In terms of biological role, plays a role in hair follicle differentiation. This chain is Forkhead box protein Q1 (FOXQ1), found in Homo sapiens (Human).